The chain runs to 370 residues: 3-dehydroquinate synthase (370 aa).

NAD(+) is bound by residues 70-75 (DAEDGK), 104-108 (GAATD), 128-129 (TT), Lys-141, Lys-150, and 168-171 (TLET). The Zn(2+) site is built by Glu-183, His-246, and His-262.

The protein belongs to the sugar phosphate cyclases superfamily. Dehydroquinate synthase family. The cofactor is Co(2+). Zn(2+) is required as a cofactor. Requires NAD(+) as cofactor.

Its subcellular location is the cytoplasm. It carries out the reaction 7-phospho-2-dehydro-3-deoxy-D-arabino-heptonate = 3-dehydroquinate + phosphate. It functions in the pathway metabolic intermediate biosynthesis; chorismate biosynthesis; chorismate from D-erythrose 4-phosphate and phosphoenolpyruvate: step 2/7. Its function is as follows. Catalyzes the conversion of 3-deoxy-D-arabino-heptulosonate 7-phosphate (DAHP) to dehydroquinate (DHQ). The protein is 3-dehydroquinate synthase of Rhodococcus opacus (strain B4).